We begin with the raw amino-acid sequence, 372 residues long: Fatty acid 2-hydroxylase (372 aa).

Residues Ala-8–Arg-86 form the Cytochrome b5 heme-binding domain. Heme-binding residues include His-43 and His-69. 2 consecutive transmembrane segments (helical) span residues Val-168–Tyr-188 and Ser-213–Ile-233. Residues Phe-219–Thr-361 form the Fatty acid hydroxylase domain. Residues His-234, His-239, His-257, His-260, and His-261 each contribute to the Zn(2+) site. A run of 2 helical transmembrane segments spans residues Val-271–Ile-291 and Leu-292–Asp-312. His-315, His-319, His-336, His-339, and His-340 together coordinate Zn(2+).

It belongs to the sterol desaturase family. SCS7 subfamily. Zn(2+) serves as cofactor.

Its subcellular location is the endoplasmic reticulum membrane. The protein resides in the microsome membrane. It catalyses the reaction a 1,2-saturated fatty acid + 2 Fe(II)-[cytochrome b5] + O2 + 2 H(+) = a (R)-2-hydroxy fatty acid + 2 Fe(III)-[cytochrome b5] + H2O. It carries out the reaction hexadecanoate + 2 Fe(II)-[cytochrome b5] + O2 + 2 H(+) = (R)-2-hydroxyhexadecanoate + 2 Fe(III)-[cytochrome b5] + H2O. The enzyme catalyses octadecanoate + 2 Fe(II)-[cytochrome b5] + O2 + 2 H(+) = (R)-2-hydroxyoctadecanoate + 2 Fe(III)-[cytochrome b5] + H2O. The catalysed reaction is docosanoate + 2 Fe(II)-[cytochrome b5] + O2 + 2 H(+) = 2-hydroxydocosanoate + 2 Fe(III)-[cytochrome b5] + H2O. It catalyses the reaction tetracosanoate + 2 Fe(II)-[cytochrome b5] + O2 + 2 H(+) = (R)-2-hydroxytetracosanoate + 2 Fe(III)-[cytochrome b5] + H2O. It participates in lipid metabolism; fatty acid metabolism. Its pathway is sphingolipid metabolism; galactosylceramide biosynthesis. Functionally, catalyzes the hydroxylation of free fatty acids at the C-2 position to produce 2-hydroxy fatty acids, which are building blocks of sphingolipids and glycosphingolipids common in neural tissue and epidermis. FA2H is stereospecific for the production of (R)-2-hydroxy fatty acids. Plays an essential role in the synthesis of galactosphingolipids of the myelin sheath. Responsible for the synthesis of sphingolipids and glycosphingolipids involved in the formation of epidermal lamellar bodies critical for skin permeability barrier. Participates in the synthesis of glycosphingolipids and a fraction of type II wax diesters in sebaceous gland, specifically regulating hair follicle homeostasis. Involved in the synthesis of sphingolipids of plasma membrane rafts, controlling lipid raft mobility and trafficking of raft-associated proteins. This Macaca fascicularis (Crab-eating macaque) protein is Fatty acid 2-hydroxylase (FA2H).